We begin with the raw amino-acid sequence, 264 residues long: uncharacterized protein (264 aa).

An N-terminal signal peptide occupies residues Met-1 to Ala-26.

This is an uncharacterized protein from Bacillus subtilis (strain 168).